Here is a 386-residue protein sequence, read N- to C-terminus: Zinc finger CCCH domain-containing protein 39 (386 aa).

Residues 1 to 90 (MDSSYSDSRP…SSSNPWMVPS (90 aa)) are disordered. Positions 20–37 (WNQTQMIDSMANPMNNEQ) are enriched in polar residues. Over residues 43–58 (LSESQSQSQPSQQLQP) the composition is skewed to low complexity. Over residues 72–85 (NPASSFPQPSSSNP) the composition is skewed to polar residues. The segment at 104–131 (FYKTRMCAKFRAGTCRNGELCNFAHGIE) adopts a C3H1-type 1 zinc-finger fold. Residues 136–166 (PPSNWQEIVGPPPAGQDRERERERERERERP) form a disordered region. Over residues 151–166 (QDRERERERERERERP) the composition is skewed to basic and acidic residues. C3H1-type zinc fingers lie at residues 183 to 211 (ILRMKLCRKFCFGEECPYGDRCNFIHEDL) and 269 to 297 (YWKTRLCMKFDITGQCPFGDKCHFAHGQA).

In Arabidopsis thaliana (Mouse-ear cress), this protein is Zinc finger CCCH domain-containing protein 39.